The primary structure comprises 393 residues: Acetate kinase (393 aa).

A Mg(2+)-binding site is contributed by Asn-7. Position 14 (Lys-14) interacts with ATP. Arg-90 serves as a coordination point for substrate. Residue Asp-147 is the Proton donor/acceptor of the active site. Residues 205–209, 280–282, and 328–332 each bind ATP; these read HLGNG, DFR, and GIGEN. Position 380 (Glu-380) interacts with Mg(2+).

Belongs to the acetokinase family. In terms of assembly, homodimer. Mg(2+) serves as cofactor. Mn(2+) is required as a cofactor.

The protein resides in the cytoplasm. The enzyme catalyses acetate + ATP = acetyl phosphate + ADP. It functions in the pathway metabolic intermediate biosynthesis; acetyl-CoA biosynthesis; acetyl-CoA from acetate: step 1/2. In terms of biological role, catalyzes the formation of acetyl phosphate from acetate and ATP. Can also catalyze the reverse reaction. This Finegoldia magna (strain ATCC 29328 / DSM 20472 / WAL 2508) (Peptostreptococcus magnus) protein is Acetate kinase.